A 311-amino-acid chain; its full sequence is Nucleotide-binding protein Acel_1111 (311 aa).

Residue G30 to S37 coordinates ATP. D81 to S84 provides a ligand contact to GTP.

Belongs to the RapZ-like family.

Its function is as follows. Displays ATPase and GTPase activities. The chain is Nucleotide-binding protein Acel_1111 from Acidothermus cellulolyticus (strain ATCC 43068 / DSM 8971 / 11B).